Reading from the N-terminus, the 371-residue chain is tRNA (guanine(26)-N(2))-dimethyltransferase (371 aa).

One can recognise a Trm1 methyltransferase domain in the interval 4-368 (VEVTEGRTRF…APLPVLEKVV (365 aa)). S-adenosyl-L-methionine is bound by residues Arg41, Arg66, Asp82, Asp108, and Ala109. Cys237, Cys240, Cys256, and Cys259 together coordinate Zn(2+).

Belongs to the class I-like SAM-binding methyltransferase superfamily. Trm1 family.

The enzyme catalyses guanosine(26) in tRNA + 2 S-adenosyl-L-methionine = N(2)-dimethylguanosine(26) in tRNA + 2 S-adenosyl-L-homocysteine + 2 H(+). In terms of biological role, dimethylates a single guanine residue at position 26 of a number of tRNAs using S-adenosyl-L-methionine as donor of the methyl groups. This chain is tRNA (guanine(26)-N(2))-dimethyltransferase, found in Methanoculleus marisnigri (strain ATCC 35101 / DSM 1498 / JR1).